Reading from the N-terminus, the 160-residue chain is Negative modulator of initiation of replication (160 aa).

This sequence belongs to the SeqA family. In terms of assembly, homodimer. Polymerizes to form helical filaments.

It is found in the cytoplasm. Negative regulator of replication initiation, which contributes to regulation of DNA replication and ensures that replication initiation occurs exactly once per chromosome per cell cycle. Binds to pairs of hemimethylated GATC sequences in the oriC region, thus preventing assembly of replication proteins and re-initiation at newly replicated origins. Repression is relieved when the region becomes fully methylated. This Idiomarina loihiensis (strain ATCC BAA-735 / DSM 15497 / L2-TR) protein is Negative modulator of initiation of replication.